Consider the following 133-residue polypeptide: uncharacterized protein (133 aa).

An N-terminal signal peptide occupies residues 1 to 23; that stretch reads MSRKIIPALTIFFGPILILTAIT. The interval 82–133 is disordered; sequence ESIKNQNSLNKEKQQQQQQQQQQQQQQQQQQQQQQKPNTPPTPLTTPSTPKK. Low complexity predominate over residues 96–118; the sequence is QQQQQQQQQQQQQQQQQQQQQKP.

It localises to the secreted. This is an uncharacterized protein from Dictyostelium discoideum (Social amoeba).